The chain runs to 148 residues: 3-dehydroquinate dehydratase (148 aa).

The active-site Proton acceptor is tyrosine 26. Substrate is bound by residues asparagine 77, histidine 83, and aspartate 90. Histidine 103 acts as the Proton donor in catalysis. Substrate is bound by residues 104–105 and arginine 114; that span reads LS.

Belongs to the type-II 3-dehydroquinase family. As to quaternary structure, homododecamer.

It carries out the reaction 3-dehydroquinate = 3-dehydroshikimate + H2O. The protein operates within metabolic intermediate biosynthesis; chorismate biosynthesis; chorismate from D-erythrose 4-phosphate and phosphoenolpyruvate: step 3/7. Catalyzes a trans-dehydration via an enolate intermediate. This Chlorobaculum tepidum (strain ATCC 49652 / DSM 12025 / NBRC 103806 / TLS) (Chlorobium tepidum) protein is 3-dehydroquinate dehydratase.